We begin with the raw amino-acid sequence, 98 residues long: DNA-binding protein Fis (98 aa).

Residues 74-93 (QTRAATMLGINRGTLRKKLK) constitute a DNA-binding region (H-T-H motif).

This sequence belongs to the transcriptional regulatory Fis family. As to quaternary structure, homodimer.

In terms of biological role, activates ribosomal RNA transcription. Plays a direct role in upstream activation of rRNA promoters. The polypeptide is DNA-binding protein Fis (Mannheimia haemolytica (Pasteurella haemolytica)).